The primary structure comprises 25 residues: uncharacterized protein (25 aa).

It is found in the plastid. The protein localises to the chloroplast. This is an uncharacterized protein from Trieres chinensis (Marine centric diatom).